A 188-amino-acid chain; its full sequence is Adenine phosphoribosyltransferase (188 aa).

This sequence belongs to the purine/pyrimidine phosphoribosyltransferase family. As to quaternary structure, homodimer.

Its subcellular location is the cytoplasm. It catalyses the reaction AMP + diphosphate = 5-phospho-alpha-D-ribose 1-diphosphate + adenine. It functions in the pathway purine metabolism; AMP biosynthesis via salvage pathway; AMP from adenine: step 1/1. Functionally, catalyzes a salvage reaction resulting in the formation of AMP, that is energically less costly than de novo synthesis. This is Adenine phosphoribosyltransferase from Neisseria meningitidis serogroup B (strain ATCC BAA-335 / MC58).